The primary structure comprises 341 residues: S-adenosylmethionine:tRNA ribosyltransferase-isomerase (341 aa).

It belongs to the QueA family. Monomer.

Its subcellular location is the cytoplasm. The enzyme catalyses 7-aminomethyl-7-carbaguanosine(34) in tRNA + S-adenosyl-L-methionine = epoxyqueuosine(34) in tRNA + adenine + L-methionine + 2 H(+). It functions in the pathway tRNA modification; tRNA-queuosine biosynthesis. Functionally, transfers and isomerizes the ribose moiety from AdoMet to the 7-aminomethyl group of 7-deazaguanine (preQ1-tRNA) to give epoxyqueuosine (oQ-tRNA). In Acetivibrio thermocellus (strain ATCC 27405 / DSM 1237 / JCM 9322 / NBRC 103400 / NCIMB 10682 / NRRL B-4536 / VPI 7372) (Clostridium thermocellum), this protein is S-adenosylmethionine:tRNA ribosyltransferase-isomerase.